The following is a 127-amino-acid chain: Large ribosomal subunit protein bL21 (127 aa).

The tract at residues 102-127 (TDNAKPTKGPRPKKAKAEAPAADAAE) is disordered.

This sequence belongs to the bacterial ribosomal protein bL21 family. As to quaternary structure, part of the 50S ribosomal subunit. Contacts protein L20.

Functionally, this protein binds to 23S rRNA in the presence of protein L20. In Bradyrhizobium sp. (strain BTAi1 / ATCC BAA-1182), this protein is Large ribosomal subunit protein bL21.